A 69-amino-acid polypeptide reads, in one-letter code: Putative membrane protein insertion efficiency factor (69 aa).

Belongs to the UPF0161 family.

The protein localises to the cell membrane. Functionally, could be involved in insertion of integral membrane proteins into the membrane. The protein is Putative membrane protein insertion efficiency factor of Clostridium kluyveri (strain NBRC 12016).